Reading from the N-terminus, the 246-residue chain is Phosphonates import ATP-binding protein PhnC (246 aa).

One can recognise an ABC transporter domain in the interval 2–246 (IKFENVSKIY…ILDEVYRKEA (245 aa)). 35 to 42 (GTSGAGKS) is a binding site for ATP.

The protein belongs to the ABC transporter superfamily. Phosphonates importer (TC 3.A.1.9.1) family. In terms of assembly, the complex is composed of two ATP-binding proteins (PhnC), two transmembrane proteins (PhnE) and a solute-binding protein (PhnD).

The protein localises to the cell membrane. The catalysed reaction is phosphonate(out) + ATP + H2O = phosphonate(in) + ADP + phosphate + H(+). Its function is as follows. Part of the ABC transporter complex PhnCDE involved in phosphonates import. Responsible for energy coupling to the transport system. The protein is Phosphonates import ATP-binding protein PhnC of Lactococcus lactis subsp. lactis (strain IL1403) (Streptococcus lactis).